We begin with the raw amino-acid sequence, 500 residues long: ATP synthase subunit alpha (500 aa).

Residue 169–176 (GDRQTGKT) coordinates ATP.

The protein belongs to the ATPase alpha/beta chains family. F-type ATPases have 2 components, CF(1) - the catalytic core - and CF(0) - the membrane proton channel. CF(1) has five subunits: alpha(3), beta(3), gamma(1), delta(1), epsilon(1). CF(0) has three main subunits: a(1), b(2) and c(9-12). The alpha and beta chains form an alternating ring which encloses part of the gamma chain. CF(1) is attached to CF(0) by a central stalk formed by the gamma and epsilon chains, while a peripheral stalk is formed by the delta and b chains.

It is found in the cell membrane. The catalysed reaction is ATP + H2O + 4 H(+)(in) = ADP + phosphate + 5 H(+)(out). Produces ATP from ADP in the presence of a proton gradient across the membrane. The alpha chain is a regulatory subunit. The chain is ATP synthase subunit alpha from Lactococcus lactis subsp. lactis (strain IL1403) (Streptococcus lactis).